A 297-amino-acid chain; its full sequence is HTH-type transcriptional regulator ArgP (297 aa).

The HTH lysR-type domain occupies 4–60 (PDYRTLQALDAVIRERGFERAAQKLCITQSAVSQRIKQLENMFGQPLLVRTVPPRPT). Positions 21–40 (FERAAQKLCITQSAVSQRIK) form a DNA-binding region, H-T-H motif.

This sequence belongs to the LysR transcriptional regulatory family. As to quaternary structure, homodimer.

Functionally, controls the transcription of genes involved in arginine and lysine metabolism. The protein is HTH-type transcriptional regulator ArgP of Escherichia coli O127:H6 (strain E2348/69 / EPEC).